The following is a 381-amino-acid chain: MTQPAIRYELLHTCKQTGARLGIVHTPHGSFETPAFMPVGTQATVKTMSPEELKEMNAGIILSNTYHLWLRPGNDIVKEAGGLHKFMNWDRPILTDSGGFQVFSLSQFRKIEEEGVHFRNHLNGDKLFLSPEKAMEIQNDLGSDIMMAFDECPPYPATHEYMLQSVDRTTRWAKRCKEAHSRPEEQGLFGIIQGGEYEDLRRRSAEALVELDFPGYAIGGLSVGEPKDIMNRVLEFTTPLMPANKPRYLMGVGSPDSLIDGAIRGVDMFDCVLPTRIARNGTLMTSEGRLVVKNAKYARDFGPIDPNCDCYTCKNYSRAYIRHLIRTEETFGIRLTSYHNLHFLLKLMEQVREAIRQDRLGDFREEFFEKYGFNGPNAKNF.

The active-site Proton acceptor is Asp96. Substrate is bound by residues 96-100, Asp150, Gln193, and Gly220; that span reads DSGGF. An RNA binding region spans residues 251-257; the sequence is GVGSPDS. Asp270 acts as the Nucleophile in catalysis. Residues 275 to 279 form an RNA binding; important for wobble base 34 recognition region; that stretch reads TRIAR. The Zn(2+) site is built by Cys308, Cys310, Cys313, and His339.

This sequence belongs to the queuine tRNA-ribosyltransferase family. Homodimer. Within each dimer, one monomer is responsible for RNA recognition and catalysis, while the other monomer binds to the replacement base PreQ1. It depends on Zn(2+) as a cofactor.

It carries out the reaction 7-aminomethyl-7-carbaguanine + guanosine(34) in tRNA = 7-aminomethyl-7-carbaguanosine(34) in tRNA + guanine. The protein operates within tRNA modification; tRNA-queuosine biosynthesis. Catalyzes the base-exchange of a guanine (G) residue with the queuine precursor 7-aminomethyl-7-deazaguanine (PreQ1) at position 34 (anticodon wobble position) in tRNAs with GU(N) anticodons (tRNA-Asp, -Asn, -His and -Tyr). Catalysis occurs through a double-displacement mechanism. The nucleophile active site attacks the C1' of nucleotide 34 to detach the guanine base from the RNA, forming a covalent enzyme-RNA intermediate. The proton acceptor active site deprotonates the incoming PreQ1, allowing a nucleophilic attack on the C1' of the ribose to form the product. After dissociation, two additional enzymatic reactions on the tRNA convert PreQ1 to queuine (Q), resulting in the hypermodified nucleoside queuosine (7-(((4,5-cis-dihydroxy-2-cyclopenten-1-yl)amino)methyl)-7-deazaguanosine). This chain is Queuine tRNA-ribosyltransferase, found in Lysinibacillus sphaericus (strain C3-41).